Here is a 674-residue protein sequence, read N- to C-terminus: DNA ligase (674 aa).

NAD(+) is bound by residues 34–38 (DAEYD), 84–85 (SL), and glutamate 116. Lysine 118 (N6-AMP-lysine intermediate) is an active-site residue. Positions 139, 174, 291, and 315 each coordinate NAD(+). 4 residues coordinate Zn(2+): cysteine 409, cysteine 412, cysteine 425, and cysteine 430. The 89-residue stretch at 586–674 (RGEEALKGLT…TGKPVETLAS (89 aa)) folds into the BRCT domain.

Belongs to the NAD-dependent DNA ligase family. LigA subfamily. Mg(2+) serves as cofactor. The cofactor is Mn(2+).

It catalyses the reaction NAD(+) + (deoxyribonucleotide)n-3'-hydroxyl + 5'-phospho-(deoxyribonucleotide)m = (deoxyribonucleotide)n+m + AMP + beta-nicotinamide D-nucleotide.. Its function is as follows. DNA ligase that catalyzes the formation of phosphodiester linkages between 5'-phosphoryl and 3'-hydroxyl groups in double-stranded DNA using NAD as a coenzyme and as the energy source for the reaction. It is essential for DNA replication and repair of damaged DNA. This chain is DNA ligase, found in Thermus scotoductus.